The chain runs to 111 residues: Colicin-Ia immunity protein (111 aa).

2 helical membrane-spanning segments follow: residues 33 to 53 (LLFW…KWYI) and 85 to 105 (TGTV…SVII).

Its subcellular location is the cell membrane. In terms of biological role, this protein is able to protect a cell, which harbors the plasmid ColIa-CA53 encoding colicin Ia, against colicin Ia. The polypeptide is Colicin-Ia immunity protein (Escherichia coli).